Reading from the N-terminus, the 360-residue chain is Vitopine synthase (360 aa).

This sequence belongs to the lysopine/nopaline/octopine/opine/vitopine dehydrogenases family.

The chain is Vitopine synthase (vis) from Allorhizobium ampelinum (strain ATCC BAA-846 / DSM 112012 / S4) (Agrobacterium vitis (strain S4)).